A 417-amino-acid polypeptide reads, in one-letter code: C4-dicarboxylate transport protein (417 aa).

8 helical membrane-spanning segments follow: residues 4 to 26, 41 to 60, 72 to 94, 137 to 159, 180 to 202, 217 to 239, 285 to 307, and 347 to 369; these read IYVQVLIAIVLGVLVGAIWPQIG, KLVIAPVIFCTVAGGIARMG, ALIYFEVVSTLALVIGLVVGRLI, FIGAFADGNLLQVLVIAILTGFA, LFFGIIHIVVRLAPIGAFGAMGF, ALVATFYVTSLLFVLVVLGGIAW, VVGLVIPTGYSFNLDGTNIYMTL, and FITLAATLAVVPDIPIAALAILV.

This sequence belongs to the dicarboxylate/amino acid:cation symporter (DAACS) (TC 2.A.23) family.

It is found in the cell inner membrane. Responsible for the transport of dicarboxylates such as succinate, fumarate, and malate from the periplasm across the membrane. The sequence is that of C4-dicarboxylate transport protein from Caulobacter vibrioides (strain ATCC 19089 / CIP 103742 / CB 15) (Caulobacter crescentus).